Consider the following 355-residue polypeptide: UDP-N-acetylglucosamine--N-acetylmuramyl-(pentapeptide) pyrophosphoryl-undecaprenol N-acetylglucosamine transferase (355 aa).

Residues 11–13, Arg164, Ser194, and Gln289 contribute to the UDP-N-acetyl-alpha-D-glucosamine site; that span reads TAG.

This sequence belongs to the glycosyltransferase 28 family. MurG subfamily.

The protein resides in the cell membrane. It carries out the reaction di-trans,octa-cis-undecaprenyl diphospho-N-acetyl-alpha-D-muramoyl-L-alanyl-D-glutamyl-meso-2,6-diaminopimeloyl-D-alanyl-D-alanine + UDP-N-acetyl-alpha-D-glucosamine = di-trans,octa-cis-undecaprenyl diphospho-[N-acetyl-alpha-D-glucosaminyl-(1-&gt;4)]-N-acetyl-alpha-D-muramoyl-L-alanyl-D-glutamyl-meso-2,6-diaminopimeloyl-D-alanyl-D-alanine + UDP + H(+). Its pathway is cell wall biogenesis; peptidoglycan biosynthesis. Functionally, cell wall formation. Catalyzes the transfer of a GlcNAc subunit on undecaprenyl-pyrophosphoryl-MurNAc-pentapeptide (lipid intermediate I) to form undecaprenyl-pyrophosphoryl-MurNAc-(pentapeptide)GlcNAc (lipid intermediate II). This is UDP-N-acetylglucosamine--N-acetylmuramyl-(pentapeptide) pyrophosphoryl-undecaprenol N-acetylglucosamine transferase from Lachnoclostridium phytofermentans (strain ATCC 700394 / DSM 18823 / ISDg) (Clostridium phytofermentans).